The primary structure comprises 881 residues: Phosphoenolpyruvate carboxylase (881 aa).

Residues H138 and K545 contribute to the active site.

The protein belongs to the PEPCase type 1 family. Mg(2+) is required as a cofactor.

It carries out the reaction oxaloacetate + phosphate = phosphoenolpyruvate + hydrogencarbonate. Functionally, forms oxaloacetate, a four-carbon dicarboxylic acid source for the tricarboxylic acid cycle. The chain is Phosphoenolpyruvate carboxylase from Shewanella oneidensis (strain ATCC 700550 / JCM 31522 / CIP 106686 / LMG 19005 / NCIMB 14063 / MR-1).